Reading from the N-terminus, the 375-residue chain is Nucleosome assembly protein 1-like 4 (375 aa).

The disordered stretch occupies residues 1–31; it reads MADHSFSDGVPSDSVEAAKNASNTEKLTDQV. Ala-2 bears the N-acetylalanine mark. Phosphoserine occurs at positions 5, 7, and 12. Residues 20-31 are compositionally biased toward polar residues; sequence NASNTEKLTDQV. Thr-51 is subject to Phosphothreonine. A phosphoserine mark is found at Ser-53 and Ser-54. A Phosphothreonine modification is found at Thr-58. Lys-105 is modified (N6-acetyllysine). The segment at 116–137 is disordered; the sequence is PTDAESEWHSENEEEEKLAGDM. Residues 121 to 137 show a composition bias toward basic and acidic residues; sequence SEWHSENEEEEKLAGDM. Ser-125 is modified (phosphoserine). Lys-146 is subject to N6-acetyllysine. The short motif at 265 to 271 is the Nuclear localization signal element; it reads IKKKQKH. Ser-304 is modified (phosphoserine). Residues 339-375 form a disordered region; it reads AIEDDDNFEEGEEGEEEELEGDEEGEDEDDAEINPKV.

Belongs to the nucleosome assembly protein (NAP) family. In terms of assembly, interacts with core (H2A, CD2APH2B, H3, H4) and linker (H1) histones. As to quaternary structure, (Microbial infection) Interacts with Chikungunya virus non-structural protein 3 (via C-terminus). Phosphorylated at the G0/G1 boundary but it is not phosphorylated in S-phase. Phosphorylated protein remains in the cytoplasm in a complex with histones during the G0/G1 transition, whereas dephosphorylation triggers its transport into the nucleus at the G1/S-boundary. Post-translationally, polyglutamylated by TTLL4, a modification that occurs exclusively on glutamate residues and results in polyglutamate chains on the gamma-carboxyl group. Some residues may also be monoglycylated but not polyglycylated due to the absence of functional TTLL10 in human. As to expression, ubiquitous. Biallelically expressed in fetal and adult tissues. Highest levels in testis.

It localises to the nucleus. Its subcellular location is the cytoplasm. Acts as a histone chaperone in nucleosome assembly. In Homo sapiens (Human), this protein is Nucleosome assembly protein 1-like 4.